The primary structure comprises 162 residues: Protein-export protein SecB 2 (162 aa).

The protein belongs to the SecB family. As to quaternary structure, homotetramer, a dimer of dimers. One homotetramer interacts with 1 SecA dimer.

It localises to the cytoplasm. In terms of biological role, one of the proteins required for the normal export of preproteins out of the cell cytoplasm. It is a molecular chaperone that binds to a subset of precursor proteins, maintaining them in a translocation-competent state. It also specifically binds to its receptor SecA. The polypeptide is Protein-export protein SecB 2 (Polaromonas naphthalenivorans (strain CJ2)).